The primary structure comprises 778 residues: Endonuclease MutS2 (778 aa).

328 to 335 (GPNTGGKT) serves as a coordination point for ATP. The 76-residue stretch at 703–778 (LDLRGKRYEE…GSGCTIANLG (76 aa)) folds into the Smr domain.

It belongs to the DNA mismatch repair MutS family. MutS2 subfamily. In terms of assembly, homodimer. Binds to stalled ribosomes, contacting rRNA.

Its function is as follows. Endonuclease that is involved in the suppression of homologous recombination and thus may have a key role in the control of bacterial genetic diversity. In terms of biological role, acts as a ribosome collision sensor, splitting the ribosome into its 2 subunits. Detects stalled/collided 70S ribosomes which it binds and splits by an ATP-hydrolysis driven conformational change. Acts upstream of the ribosome quality control system (RQC), a ribosome-associated complex that mediates the extraction of incompletely synthesized nascent chains from stalled ribosomes and their subsequent degradation. Probably generates substrates for RQC. This is Endonuclease MutS2 from Streptococcus equi subsp. zooepidemicus (strain H70).